Consider the following 118-residue polypeptide: Large ribosomal subunit protein uL24 (118 aa).

This sequence belongs to the universal ribosomal protein uL24 family. Part of the 50S ribosomal subunit.

In terms of biological role, one of two assembly initiator proteins, it binds directly to the 5'-end of the 23S rRNA, where it nucleates assembly of the 50S subunit. One of the proteins that surrounds the polypeptide exit tunnel on the outside of the subunit. This is Large ribosomal subunit protein uL24 from Synechococcus sp. (strain CC9902).